The primary structure comprises 338 residues: GTP 3',8-cyclase (338 aa).

The region spanning 8–227 (KLQRPLKDLR…DMIHQVMPLE (220 aa)) is the Radical SAM core domain. R17 is a binding site for GTP. Positions 24 and 28 each coordinate [4Fe-4S] cluster. Y30 provides a ligand contact to S-adenosyl-L-methionine. C31 provides a ligand contact to [4Fe-4S] cluster. R71 is a GTP binding site. G75 provides a ligand contact to S-adenosyl-L-methionine. T102 contributes to the GTP binding site. S126 is a binding site for S-adenosyl-L-methionine. K163 lines the GTP pocket. Position 197 (M197) interacts with S-adenosyl-L-methionine. [4Fe-4S] cluster-binding residues include C261 and C264. 266–268 (RAR) serves as a coordination point for GTP. C278 lines the [4Fe-4S] cluster pocket.

Belongs to the radical SAM superfamily. MoaA family. Monomer and homodimer. It depends on [4Fe-4S] cluster as a cofactor.

The catalysed reaction is GTP + AH2 + S-adenosyl-L-methionine = (8S)-3',8-cyclo-7,8-dihydroguanosine 5'-triphosphate + 5'-deoxyadenosine + L-methionine + A + H(+). The protein operates within cofactor biosynthesis; molybdopterin biosynthesis. In terms of biological role, catalyzes the cyclization of GTP to (8S)-3',8-cyclo-7,8-dihydroguanosine 5'-triphosphate. The chain is GTP 3',8-cyclase from Bacillus anthracis (strain CDC 684 / NRRL 3495).